The primary structure comprises 95 residues: Aspartyl/glutamyl-tRNA(Asn/Gln) amidotransferase subunit C (95 aa).

Belongs to the GatC family. As to quaternary structure, heterotrimer of A, B and C subunits.

The enzyme catalyses L-glutamyl-tRNA(Gln) + L-glutamine + ATP + H2O = L-glutaminyl-tRNA(Gln) + L-glutamate + ADP + phosphate + H(+). It catalyses the reaction L-aspartyl-tRNA(Asn) + L-glutamine + ATP + H2O = L-asparaginyl-tRNA(Asn) + L-glutamate + ADP + phosphate + 2 H(+). Its function is as follows. Allows the formation of correctly charged Asn-tRNA(Asn) or Gln-tRNA(Gln) through the transamidation of misacylated Asp-tRNA(Asn) or Glu-tRNA(Gln) in organisms which lack either or both of asparaginyl-tRNA or glutaminyl-tRNA synthetases. The reaction takes place in the presence of glutamine and ATP through an activated phospho-Asp-tRNA(Asn) or phospho-Glu-tRNA(Gln). This Dehalococcoides mccartyi (strain ATCC BAA-2266 / KCTC 15142 / 195) (Dehalococcoides ethenogenes (strain 195)) protein is Aspartyl/glutamyl-tRNA(Asn/Gln) amidotransferase subunit C.